The following is a 347-amino-acid chain: NADH-ubiquinone oxidoreductase chain 2 (347 aa).

The next 11 helical transmembrane spans lie at 3–23 (PPIL…VLTS), 25–45 (HWLT…PILM), 59–79 (YLLT…IDLL), 96–116 (AMMT…FWVP), 122–142 (IHMS…LSIL), 149–169 (INPN…GWGG), 178–198 (ILAY…LYNP), 200–220 (MMIL…MLFM), 237–257 (APLI…LPPL), 274–294 (EMII…YFYM), and 325–345 (LLSP…LLSI).

It belongs to the complex I subunit 2 family. In terms of assembly, core subunit of respiratory chain NADH dehydrogenase (Complex I) which is composed of 45 different subunits. Interacts with TMEM242.

Its subcellular location is the mitochondrion inner membrane. The enzyme catalyses a ubiquinone + NADH + 5 H(+)(in) = a ubiquinol + NAD(+) + 4 H(+)(out). Core subunit of the mitochondrial membrane respiratory chain NADH dehydrogenase (Complex I) which catalyzes electron transfer from NADH through the respiratory chain, using ubiquinone as an electron acceptor. Essential for the catalytic activity and assembly of complex I. The protein is NADH-ubiquinone oxidoreductase chain 2 of Cynictis penicillata (Yellow mongoose).